Reading from the N-terminus, the 196-residue chain is Heat shock protein beta-8 (196 aa).

Positions 1–34 are disordered; it reads MADGQMPFPCHYTSRRRRDPFRDSPLSSRLLDDG. The span at 23 to 34 shows a compositional bias: low complexity; sequence DSPLSSRLLDDG. Residues S24 and S57 each carry the phosphoserine modification. T63 carries the phosphothreonine modification. Asymmetric dimethylarginine is present on residues R71 and R78. Positions 74 to 185 constitute a sHSP domain; that stretch reads TAMTRFGVPA…PFGESSFNNE (112 aa). A Phosphoserine modification is found at S87. Residues 176 to 196 are disordered; that stretch reads PFGESSFNNELPQDGQEVTCT. Over residues 178–196 the composition is skewed to polar residues; the sequence is GESSFNNELPQDGQEVTCT.

It belongs to the small heat shock protein (HSP20) family. In terms of assembly, monomer. Forms a ternary complex with BAG3 and HSPA1A. Component of the chaperone-assisted selective autophagy (CASA) complex consisting of BAG3, HSPA8/HSC70, HSPB8 and STUB1/CHIP. Interacts with HSPB1. Interacts with DNAJB6. Interacts with BAG3. Phosphorylated.

It localises to the cytoplasm. Its subcellular location is the nucleus. In terms of biological role, involved in the chaperone-assisted selective autophagy (CASA), a crucial process for protein quality control, particularly in mechanical strained cells and tissues such as muscle. Displays temperature-dependent chaperone activity. The sequence is that of Heat shock protein beta-8 (HSPB8) from Bos taurus (Bovine).